The chain runs to 425 residues: Rho GTPase-activating protein 8 (425 aa).

The CRAL-TRIO domain maps to 13-168 (PFYDVARHGI…EVVRYDEKLQ (156 aa)). Residues 169–192 (NLHKGQPPPPTKTPPPRPPLPTQQ) form a disordered region. Residues 174-189 (QPPPPTKTPPPRPPLP) show a composition bias toward pro residues. The 187-residue stretch at 195–381 (VSLQYLRDKN…LLIEYYDKVF (187 aa)) folds into the Rho-GAP domain.

In terms of tissue distribution, highly expressed in skeletal muscle, lung and testis, and at lower levels in kidney, stomach and colon. Not detected in heart, liver, spleen, breast, brain, neonatal head or pancreas.

In terms of biological role, GTPase activator for the Rho-type GTPases by converting them to an inactive GDP-bound state. This is Rho GTPase-activating protein 8 (Arhgap8) from Mus musculus (Mouse).